We begin with the raw amino-acid sequence, 566 residues long: ALBINO3-like protein 3, mitochondrial (566 aa).

A mitochondrion-targeting transit peptide spans 1–44 (MAFRRVLLSHLRRSHHTCSSLSPHHVSATTQPSIALALFQSRFF). The next 4 membrane-spanning stretches (helical) occupy residues 139 to 159 (WVVI…ILIL), 207 to 227 (LWVP…ITSI), 249 to 269 (LTEI…AGLH), and 301 to 321 (LLTC…LLYW). TPR repeat units lie at residues 386-419 (PKEL…DPEY), 420-453 (LQAM…LLDT), 465-498 (IVAS…KEPD), and 507-540 (LDAL…DPSF). A disordered region spans residues 547–566 (CEEDDTIPTSSSSNSTSKTS). Low complexity predominate over residues 555 to 566 (TSSSSNSTSKTS).

This sequence belongs to the OXA1/ALB3/YidC (TC 2.A.9.2) family.

It is found in the mitochondrion inner membrane. Functionally, probably required for the insertion of integral membrane proteins into the mitochondrial inner membrane. The protein is ALBINO3-like protein 3, mitochondrial (ALB3L3) of Arabidopsis thaliana (Mouse-ear cress).